We begin with the raw amino-acid sequence, 179 residues long: Probable mitochondrial import inner membrane translocase subunit Tim17 1 (179 aa).

The next 3 helical transmembrane spans lie at 17–37 (CGGAFAMGALGGGAFQAIKGF), 61–81 (LVGGNFAVWGATFSAIDCSLV), and 113–133 (LSSALVGGALLALIEGVGIVV).

It belongs to the Tim17/Tim22/Tim23 family. In terms of assembly, component of the TIM23 complex at least composed of Tim23, Tim17 (Tim17a1, Tim17a2 or Tim17b1) and a Tim50. The complex interacts with the Tim44 component of the PAM complex.

Its subcellular location is the mitochondrion inner membrane. In terms of biological role, essential component of the TIM23 complex, a complex that mediates the translocation of transit peptide-containing proteins across the mitochondrial inner membrane. The chain is Probable mitochondrial import inner membrane translocase subunit Tim17 1 (Tim17b1) from Drosophila melanogaster (Fruit fly).